Consider the following 229-residue polypeptide: Enolase-phosphatase E1 (229 aa).

The protein belongs to the HAD-like hydrolase superfamily. MasA/MtnC family. As to quaternary structure, monomer. It depends on Mg(2+) as a cofactor.

The enzyme catalyses 5-methylsulfanyl-2,3-dioxopentyl phosphate + H2O = 1,2-dihydroxy-5-(methylsulfanyl)pent-1-en-3-one + phosphate. It participates in amino-acid biosynthesis; L-methionine biosynthesis via salvage pathway; L-methionine from S-methyl-5-thio-alpha-D-ribose 1-phosphate: step 3/6. The protein operates within amino-acid biosynthesis; L-methionine biosynthesis via salvage pathway; L-methionine from S-methyl-5-thio-alpha-D-ribose 1-phosphate: step 4/6. Bifunctional enzyme that catalyzes the enolization of 2,3-diketo-5-methylthiopentyl-1-phosphate (DK-MTP-1-P) into the intermediate 2-hydroxy-3-keto-5-methylthiopentenyl-1-phosphate (HK-MTPenyl-1-P), which is then dephosphorylated to form the acireductone 1,2-dihydroxy-3-keto-5-methylthiopentene (DHK-MTPene). This is Enolase-phosphatase E1 from Yersinia enterocolitica serotype O:8 / biotype 1B (strain NCTC 13174 / 8081).